Consider the following 352-residue polypeptide: N-acetyl-gamma-glutamyl-phosphate reductase (352 aa).

The active site involves Cys-158.

The protein belongs to the NAGSA dehydrogenase family. Type 1 subfamily.

It localises to the cytoplasm. It catalyses the reaction N-acetyl-L-glutamate 5-semialdehyde + phosphate + NADP(+) = N-acetyl-L-glutamyl 5-phosphate + NADPH + H(+). The protein operates within amino-acid biosynthesis; L-arginine biosynthesis; N(2)-acetyl-L-ornithine from L-glutamate: step 3/4. In terms of biological role, catalyzes the NADPH-dependent reduction of N-acetyl-5-glutamyl phosphate to yield N-acetyl-L-glutamate 5-semialdehyde. The polypeptide is N-acetyl-gamma-glutamyl-phosphate reductase (Mycobacterium bovis (strain BCG / Tokyo 172 / ATCC 35737 / TMC 1019)).